We begin with the raw amino-acid sequence, 490 residues long: Acetyl-coenzyme A carboxylase carboxyl transferase subunit beta, chloroplastic (490 aa).

Positions 184 to 203 are disordered; sequence LNSSENEGSSRRTRTKGSDL. Positions 221–490 constitute a CoA carboxyltransferase N-terminal domain; sequence LWVQCENCYG…PLNQKSSKIK (270 aa). C225, C228, C244, and C247 together coordinate Zn(2+). The C4-type zinc finger occupies 225 to 247; the sequence is CENCYGLNYKKFLKSKMNICEQC.

The protein belongs to the AccD/PCCB family. In terms of assembly, acetyl-CoA carboxylase is a heterohexamer composed of biotin carboxyl carrier protein, biotin carboxylase and 2 subunits each of ACCase subunit alpha and ACCase plastid-coded subunit beta (accD). Requires Zn(2+) as cofactor.

The protein resides in the plastid. Its subcellular location is the chloroplast stroma. The catalysed reaction is N(6)-carboxybiotinyl-L-lysyl-[protein] + acetyl-CoA = N(6)-biotinyl-L-lysyl-[protein] + malonyl-CoA. It participates in lipid metabolism; malonyl-CoA biosynthesis; malonyl-CoA from acetyl-CoA: step 1/1. In terms of biological role, component of the acetyl coenzyme A carboxylase (ACC) complex. Biotin carboxylase (BC) catalyzes the carboxylation of biotin on its carrier protein (BCCP) and then the CO(2) group is transferred by the transcarboxylase to acetyl-CoA to form malonyl-CoA. In Solanum bulbocastanum (Wild potato), this protein is Acetyl-coenzyme A carboxylase carboxyl transferase subunit beta, chloroplastic.